A 1086-amino-acid polypeptide reads, in one-letter code: Rh5-interacting protein (1086 aa).

Residues 1–19 form the signal peptide; it reads MFRIFFTLLIIILIKKTSA. N-linked (GlcNAc...) asparagine glycans are attached at residues Asn103, Asn144, Asn228, Asn303, Asn334, Asn480, Asn498, Asn506, Asn526, and Asn646. EGF-like domains lie at 287–321 and 325–362; these read RCTQDICSVNQFCDGENETCTCKTSLLPSAKNNCE and LCTVLNCPENSTCEQIGNGKKAECKCENGKYYHNNKCY. EGF-like domains follow at residues 636 to 675, 679 to 715, 719 to 753, 818 to 854, 858 to 897, 901 to 938, and 942 to 979; these read SCSNLCNKCHNNSTCYGNRFNYDCFCDNPYISKYGNKLCE, DCESVLCSQNQVCQILPNDKLICQCEEGYKNVKGKCV, KCDLSCPSNKVCVIENGKQTCKCSERFVLENGVCI, YCKDINCKENEECSIVNFKPECVCKENLKKNNKGECI, SCLINEGNCPKDSKCIYREYKPHECVCNKQGHVAVNGKCV, KCVHNKKCSENSICVNVMNKEPICVCTYNYYKKDGVCL, and PCLKDNGGCSRNSECTFKYSKINCTCKENYKNKDDSCV. N-linked (GlcNAc...) asparagine glycans are attached at residues Asn964 and Asn1021.

Component of the PfRH5 adhesion complex composed of 1 copy of CyRPA, RH5 and RIPR; the complex is formed during merozoite invasion of host erythrocytes specifically at the interface between the parasite and host membranes. Within the complex, interacts with CyRPA. CyRPA recruitment of RIPR to RH5-P113-BSG leads to the formation of the PfRH5 adhesion complex which probably in turn releases RH5 from P113 while maintaining the interaction of the PfRH5 adhesion complex with BSG. Proteolytically cleaved into two chains of 125kDa and 65kDa which remain associated. The cleavage occurs at the schizont stage prior to the release of merozoites. In terms of processing, contains disulfide bonds.

The protein localises to the secreted. It is found in the cytoplasmic vesicle. It localises to the secretory vesicle. The protein resides in the microneme lumen. Its subcellular location is the cell membrane. The protein localises to the host cell membrane. In terms of biological role, essential for the invasion of host erythrocytes by blood stage merozoites. As part of the PfRH5 adhesion complex, facilitates the interaction of RH5 and human BSG required for the Ca(2+) release into the erythrocyte. The polypeptide is Rh5-interacting protein (RIPR) (Plasmodium falciparum (isolate 3D7)).